A 90-amino-acid chain; its full sequence is Putative membrane protein insertion efficiency factor (90 aa).

Belongs to the UPF0161 family.

The protein localises to the cell membrane. In terms of biological role, could be involved in insertion of integral membrane proteins into the membrane. The protein is Putative membrane protein insertion efficiency factor of Lactococcus lactis subsp. cremoris (strain SK11).